A 72-amino-acid polypeptide reads, in one-letter code: Hirudin variant-2 (72 aa).

The first 7 residues, 1–7 (AICVSQA), serve as a signal peptide directing secretion. The interaction with thrombin active site stretch occupies residues 8 to 10 (ITY). Disulfide bonds link Cys-13/Cys-21, Cys-23/Cys-35, and Cys-29/Cys-46. The interval 47–72 (VTGEGTPNPESHNNGDFEEIPEEYLQ) is disordered. Thr-52 carries O-linked (GalNAc...) threonine glycosylation. An interaction with fibrinogen-binding exosite of thrombin region spans residues 62 to 72 (DFEEIPEEYLQ). Residues 62-72 (DFEEIPEEYLQ) show a composition bias toward acidic residues. Residue Tyr-70 is modified to Sulfotyrosine.

The protein belongs to the protease inhibitor I14 (hirudin) family.

It localises to the secreted. In terms of biological role, hirudin is a potent thrombin-specific protease inhibitor. It forms a stable non-covalent complex with alpha-thrombin, thereby abolishing its ability to cleave fibrinogen. This is Hirudin variant-2 from Hirudo medicinalis (Medicinal leech).